The chain runs to 157 residues: Protein SINE4 (157 aa).

The KASH domain occupies 104 to 157 (VTSSSDTTKAKKKTTIRRFVSVTMVLLLSWVLVVLMNHFDHLSMNTQIITLVPT). Residues 122 to 142 (FVSVTMVLLLSWVLVVLMNHF) traverse the membrane as a helical segment. The Required for nuclear localization signature appears at 154–157 (LVPT).

As to quaternary structure, interacts with SUN1 and SUN2.

It is found in the nucleus membrane. In Arabidopsis thaliana (Mouse-ear cress), this protein is Protein SINE4.